The primary structure comprises 413 residues: Divalent metal cation transporter MntH (413 aa).

Over 1–19 (MTDNRVENSSGRAARKLRL) the chain is Cytoplasmic. A helical membrane pass occupies residues 20–39 (ALMGPAFIAAIGYIDPGNFA). The Periplasmic portion of the chain corresponds to 40 to 51 (TNIQAGASFGYQ). A helical membrane pass occupies residues 52–71 (LLWVVVWANLMAMLIQILSA). Topologically, residues 72 to 95 (KLGIATGKNLAEQIRDHYPRPVVW) are cytoplasmic. The helical transmembrane segment at 96–118 (FYWVQAEIIAMATDLAEFIGAAI) threads the bilayer. The Periplasmic segment spans residues 119-125 (GFKLILG). Residues 126 to 145 (VSLLQGAVLTGIATFLILML) traverse the membrane as a helical segment. Over 146-155 (QRRGQKPLEK) the chain is Cytoplasmic. The helical transmembrane segment at 156-175 (VIGGLLLFVAAAYIVELFFS) threads the bilayer. The Periplasmic segment spans residues 176–196 (QPDMAQLGKGMVIPALPNPEA). Residues 197–220 (VFLAAGVLGATIMPHVIYLHSSLT) traverse the membrane as a helical segment. The Cytoplasmic segment spans residues 221–238 (QHLHGGTRQQRYSATKWD). Residues 239 to 258 (VAIAMTIAGFVNLAMMATAA) form a helical membrane-spanning segment. Topologically, residues 259-276 (AAFHFSGHTGIADLDQAY) are periplasmic. Residues 277-297 (LTLEPLLSHAAATVFGLSLVA) form a helical membrane-spanning segment. At 298 to 327 (AGLSSTVVGTLAGQVVMQGFVRFHIPLWVR) the chain is on the cytoplasmic side. The chain crosses the membrane as a helical span at residues 328–344 (RTITMLPSFIVILMGLD). The Periplasmic segment spans residues 345–350 (PTRILV). Residues 351-370 (MSQVLLSFGIALALVPLLIF) traverse the membrane as a helical segment. The Cytoplasmic portion of the chain corresponds to 371–387 (TSNATLMGELVNTRRVK). A helical membrane pass occupies residues 388 to 406 (QIGWIIVVLVVALNIWLLV). Residues 407 to 413 (GTVMGLS) are Periplasmic-facing.

The protein belongs to the NRAMP family.

It is found in the cell inner membrane. In terms of biological role, h(+)-stimulated, divalent metal cation uptake system. This chain is Divalent metal cation transporter MntH, found in Salmonella schwarzengrund (strain CVM19633).